The primary structure comprises 1191 residues: Solute carrier family 12 member 2 (1191 aa).

The tract at residues 1 to 166 (MEPAFPASSA…MSEGSLHSSG (166 aa)) is disordered. Residues 1 to 258 (MEPAFPASSA…ADNKGVVKFG (258 aa)) lie on the Cytoplasmic side of the membrane. 4 stretches are compositionally biased toward low complexity: residues 13–25 (QSQS…AGQQ), 59–69 (KGQTAAQPAAA), 80–99 (AAAP…AAAA), and 131–141 (SASSAHGGHQP). Positions 142 to 155 (PSESMNGYPQNGDT) are enriched in polar residues. Residues T175, T179, and T184 each carry the phosphothreonine; by OXSR1 and STK39 modification. Phosphothreonine occurs at positions 189 and 202. A discontinuously helical membrane pass occupies residues 259–288 (WIKGVLVRCMLNIWGVMLFIRLSWIVGHAG). L269 contributes to the Na(+) binding site. Residues N270 and I271 each coordinate K(+). W272 contributes to the Na(+) binding site. The chloride site is built by G273, V274, and M275. Residues 289–308 (IGLALLVIGTATVVTTITGL) form a helical membrane-spanning segment. Residues 309-339 (STSAITTNGFVRGGGAYYLISRSLGPEFGGA) are Cytoplasmic-facing. A helical transmembrane segment spans residues 340–367 (IGLIFAFANAVAVAMYVVGFAETVRDLL). F344 is a chloride binding site. Y355 contacts K(+). The Extracellular portion of the chain corresponds to 368–377 (VEHNALMIDE). Residues 378–401 (MSDIRIIGSVTIVVLFGISVAGME) traverse the membrane as a helical segment. Residues 402–404 (WEA) are Cytoplasmic-facing. Residues 405 to 426 (KAQIVLLGILLLAIVNFTVGTF) traverse the membrane as a helical segment. The Extracellular segment spans residues 427-458 (IPANDKRAKGFFNYRGEIFSENFVPDFRDGED). Residues 459-476 (FFSVFAIFFPAATGILAG) form a discontinuously helical membrane-spanning segment. P468, A469, and T471 together coordinate K(+). Positions 468 and 469 each coordinate chloride. 2 residues coordinate chloride: G472 and I473. The Cytoplasmic portion of the chain corresponds to 477–491 (ANISGDLADPQLAIP). A helical transmembrane segment spans residues 492-513 (KGTLLAILITTIVYAGAAVSVG). Topologically, residues 514–571 (SCIVREATGNLTDAIIPGTVTNCTNVACKLGFNFSSCATNKCSYGLMNDFQVMSLVSG) are extracellular. 2 N-linked (GlcNAc...) asparagine glycosylation sites follow: N523 and N535. A disulfide bridge links C536 with C541. N-linked (GlcNAc...) asparagine glycosylation is present at N546. Residues C550 and C555 are joined by a disulfide bond. A helical transmembrane segment spans residues 572–596 (FGPLITAGIFSATLSSALASLVSAP). Residues A583, S586, and S587 each coordinate Na(+). The Cytoplasmic portion of the chain corresponds to 597 to 624 (KIFQALCKDNIYPGLHVFSVGYGKNNEP). Helical transmembrane passes span 625–645 (LRGY…AELN) and 646–664 (VIAP…LINF). Chloride is bound by residues F655 and Y659. Residues 665 to 687 (SVFHASLAKSPGWRPAFRFYNMW) lie on the Cytoplasmic side of the membrane. Helical transmembrane passes span 688 to 705 (ISLI…VINW) and 706 to 718 (WAAL…VLAL). The Cytoplasmic segment spans residues 719-1191 (YIYVTYKKPD…NHQSVLTFYS (473 aa)). The segment at 734-751 (STQALTYLNALQHAIRLT) is scissor helix. The disordered stretch occupies residues 929-972 (HSDADSSKPSSKSVSETNSPAVCQDQKDEEDDGKASTQPLLKKE). The segment covering 935–948 (SKPSSKSVSETNSP) has biased composition (low complexity). At T1114 the chain carries Phosphothreonine.

The protein belongs to the SLC12A transporter family. In terms of assembly, homodimer. Post-translationally, phosphorylated at Thr-175, Thr-179 and Thr-184 by OXSR1/OSR1 and STK39/SPAK downstream of WNK kinases (WNK1, WNK2, WNK3 or WNK4), promoting its activity. In terms of tissue distribution, strongly expressed in rectal gland, brain, gill and intestine. Also detected at lower levels in heart, kidney, and testis.

The protein localises to the basolateral cell membrane. The enzyme catalyses K(+)(out) + 2 chloride(out) + Na(+)(out) = K(+)(in) + 2 chloride(in) + Na(+)(in). Activated following phosphorylation by OXSR1/OSR1 and STK39/SPAK. Inhibited by bumetanide. Functionally, cation-chloride cotransporter which mediates the electroneutral transport of chloride, potassium and/or sodium ions across the membrane. Plays a vital role in the regulation of ionic balance and cell volume. This Squalus acanthias (Spiny dogfish) protein is Solute carrier family 12 member 2 (SLC12A2).